The following is a 20-amino-acid chain: Pregnancy-associated glycoprotein 71D (20 aa).

Residue asparagine 4 is glycosylated (N-linked (GlcNAc...) asparagine).

It belongs to the peptidase A1 family. In terms of tissue distribution, chorionic epithelium (trophectoderm) and placental cotyledons.

It is found in the secreted. Its subcellular location is the extracellular space. This Bison bonasus (European bison) protein is Pregnancy-associated glycoprotein 71D.